A 340-amino-acid polypeptide reads, in one-letter code: Sulfotransferase 2B1 (340 aa).

A 3'-phosphoadenylyl sulfate-binding site is contributed by 67–72; it reads KSGTNW. Residues Trp95 and Trp100 each coordinate substrate. His122 functions as the Proton acceptor in the catalytic mechanism. 3'-phosphoadenylyl sulfate is bound by residues Arg144, Ser152, Tyr207, 241–246, and 271–273; these read SAFAAM and RKG. Positions 301 to 340 are disordered; the sequence is LPSFPWDRSAEDGSPDGETEPSPSPSPGLASDDPNPGSSQ.

The protein belongs to the sulfotransferase 1 family. Isoform 1 is expressed in skin and testis. Higher level of isoform 2 expressed in skin and intestine, moderate level in the kidney, low level in liver, stomach and placenta.

The protein resides in the cytoplasm. The protein localises to the cytosol. It is found in the microsome. Its subcellular location is the nucleus. It catalyses the reaction an alcohol + 3'-phosphoadenylyl sulfate = an alkyl sulfate + adenosine 3',5'-bisphosphate + H(+). The catalysed reaction is pregnenolone + 3'-phosphoadenylyl sulfate = pregnenolone sulfate + adenosine 3',5'-bisphosphate + H(+). It carries out the reaction 3beta-hydroxyandrost-5-en-17-one + 3'-phosphoadenylyl sulfate = dehydroepiandrosterone 3-sulfate + adenosine 3',5'-bisphosphate + H(+). The enzyme catalyses cholesterol + 3'-phosphoadenylyl sulfate = cholesterol sulfate + adenosine 3',5'-bisphosphate + H(+). Its function is as follows. Sulfotransferase that utilizes 3'-phospho-5'-adenylyl sulfate (PAPS) as sulfonate donor to catalyze the sulfate conjugation. Sulfonation increases the water solubility of most compounds, and therefore their renal excretion, but it can also result in bioactivation to form active metabolites. Sulfonates cholesterol. Catalyzes sulfation of the 3beta-hydroxyl groups of steroids, such as, pregnenolone and dehydroepiandrosterone (DHEA). Conjugates efficiently cholesterol but has a greater affinity for pregnenolone sulfation. Does not show high activity with DHEA. Plays a role in epidermal cholesterol metabolism and in the regulation of epidermal proliferation and differentiation. Prefers pregnenolone over DHEA as a substrate and does not sulfate cholesterol. The polypeptide is Sulfotransferase 2B1 (Rattus norvegicus (Rat)).